Here is a 176-residue protein sequence, read N- to C-terminus: Imidazoleglycerol-phosphate dehydratase (176 aa).

It belongs to the imidazoleglycerol-phosphate dehydratase family.

The protein resides in the cytoplasm. The catalysed reaction is D-erythro-1-(imidazol-4-yl)glycerol 3-phosphate = 3-(imidazol-4-yl)-2-oxopropyl phosphate + H2O. Its pathway is amino-acid biosynthesis; L-histidine biosynthesis; L-histidine from 5-phospho-alpha-D-ribose 1-diphosphate: step 6/9. This is Imidazoleglycerol-phosphate dehydratase from Pyrococcus furiosus (strain ATCC 43587 / DSM 3638 / JCM 8422 / Vc1).